Reading from the N-terminus, the 328-residue chain is 4-hydroxy-3-methylbut-2-enyl diphosphate reductase (328 aa).

A [4Fe-4S] cluster-binding site is contributed by Cys-24. (2E)-4-hydroxy-3-methylbut-2-enyl diphosphate is bound by residues His-55 and His-88. Positions 55 and 88 each coordinate dimethylallyl diphosphate. 2 residues coordinate isopentenyl diphosphate: His-55 and His-88. Position 110 (Cys-110) interacts with [4Fe-4S] cluster. Position 138 (His-138) interacts with (2E)-4-hydroxy-3-methylbut-2-enyl diphosphate. His-138 serves as a coordination point for dimethylallyl diphosphate. His-138 contributes to the isopentenyl diphosphate binding site. Residue Glu-140 is the Proton donor of the active site. Thr-178 lines the (2E)-4-hydroxy-3-methylbut-2-enyl diphosphate pocket. Cys-208 lines the [4Fe-4S] cluster pocket. 4 residues coordinate (2E)-4-hydroxy-3-methylbut-2-enyl diphosphate: Ser-236, Ser-237, Asn-238, and Ser-279. Positions 236, 237, 238, and 279 each coordinate dimethylallyl diphosphate. Positions 236, 237, 238, and 279 each coordinate isopentenyl diphosphate.

The protein belongs to the IspH family. [4Fe-4S] cluster is required as a cofactor.

It carries out the reaction isopentenyl diphosphate + 2 oxidized [2Fe-2S]-[ferredoxin] + H2O = (2E)-4-hydroxy-3-methylbut-2-enyl diphosphate + 2 reduced [2Fe-2S]-[ferredoxin] + 2 H(+). It catalyses the reaction dimethylallyl diphosphate + 2 oxidized [2Fe-2S]-[ferredoxin] + H2O = (2E)-4-hydroxy-3-methylbut-2-enyl diphosphate + 2 reduced [2Fe-2S]-[ferredoxin] + 2 H(+). It functions in the pathway isoprenoid biosynthesis; dimethylallyl diphosphate biosynthesis; dimethylallyl diphosphate from (2E)-4-hydroxy-3-methylbutenyl diphosphate: step 1/1. It participates in isoprenoid biosynthesis; isopentenyl diphosphate biosynthesis via DXP pathway; isopentenyl diphosphate from 1-deoxy-D-xylulose 5-phosphate: step 6/6. Catalyzes the conversion of 1-hydroxy-2-methyl-2-(E)-butenyl 4-diphosphate (HMBPP) into a mixture of isopentenyl diphosphate (IPP) and dimethylallyl diphosphate (DMAPP). Acts in the terminal step of the DOXP/MEP pathway for isoprenoid precursor biosynthesis. This Ehrlichia ruminantium (strain Gardel) protein is 4-hydroxy-3-methylbut-2-enyl diphosphate reductase.